The following is a 323-amino-acid chain: Macrolide efflux protein A (323 aa).

The next 9 membrane-spanning stretches (helical) occupy residues 6-26 (VLSM…AIGV), 51-71 (LTIV…VLFI), 105-125 (SLQS…YSVW), 128-148 (NAII…VLIV), 182-202 (FALL…NALF), 219-239 (ITEI…GLFG), 245-265 (ILLI…SGLL), 270-290 (FFIF…YSGV), and 303-323 (YLGR…PIGL).

The protein belongs to the major facilitator superfamily. Drug:H(+) antiporter-3 (DHA3) (TC 2.A.1.21) family.

The protein localises to the cell membrane. In terms of biological role, confers resistance to 14-membered macrolides including erythromycin and to 15-membered macrolides but not to 16-membered macrolides, lincosamides or analogs of streptogramin B. May function as an efflux pump to regulate intracellular macrolide levels. The chain is Macrolide efflux protein A (mefA) from Enterococcus faecalis (Streptococcus faecalis).